Reading from the N-terminus, the 220-residue chain is Large ribosomal subunit protein uL3 (220 aa).

The disordered stretch occupies residues 61 to 81 (KGSKSNKYANKPAEGHAKKAD).

This sequence belongs to the universal ribosomal protein uL3 family. In terms of assembly, part of the 50S ribosomal subunit. Forms a cluster with proteins L14 and L19.

Functionally, one of the primary rRNA binding proteins, it binds directly near the 3'-end of the 23S rRNA, where it nucleates assembly of the 50S subunit. This Staphylococcus epidermidis (strain ATCC 12228 / FDA PCI 1200) protein is Large ribosomal subunit protein uL3.